A 185-amino-acid chain; its full sequence is Nuclear transcription factor Y subunit B-3 (185 aa).

Gly residues predominate over residues 1 to 36 (MADGPGSPGGGGGSHESGSPRGGGGGGGGGGGGGGV). A disordered region spans residues 1–39 (MADGPGSPGGGGGSHESGSPRGGGGGGGGGGGGGGVREQ). Residues 43–49 (LPIANIS) mediate DNA binding. The segment at 70-81 (VQECVSEFISFI) is subunit association domain (SAD). The segment at 145-164 (KDVLGSHGGSSSSAQGMGQQ) is disordered. The span at 153–164 (GSSSSAQGMGQQ) shows a compositional bias: low complexity.

This sequence belongs to the NFYB/HAP3 subunit family. As to quaternary structure, heterotrimeric transcription factor composed of three components, NF-YA, NF-YB and NF-YC. NF-YB and NF-YC must interact and dimerize for NF-YA association and DNA binding. Ubiquitous.

The protein localises to the nucleus. Functionally, component of the NF-Y/HAP transcription factor complex. The NF-Y complex stimulates the transcription of various genes by recognizing and binding to a CCAAT motif in promoters. May regulate the expression of photosynthetic genes, and may be involved in chloroplast and amyloplast development. This is Nuclear transcription factor Y subunit B-3 (NFYB3) from Oryza sativa subsp. japonica (Rice).